The sequence spans 388 residues: Alpha-2A adrenergic receptor (388 aa).

The Extracellular portion of the chain corresponds to 1–22 (MICGANATNGTNATKEYTLLVA). Residues asparagine 6, asparagine 9, and asparagine 12 are each glycosylated (N-linked (GlcNAc...) asparagine). The chain crosses the membrane as a helical span at residues 23 to 48 (LPLSIAVGLLILLIIFGNVLVIIAVF). Residues 49 to 59 (TSRALRAPQNL) lie on the Cytoplasmic side of the membrane. The chain crosses the membrane as a helical span at residues 60 to 85 (FLVSLASADILVATLVMPFSLANELM). At 86–95 (GMWTFGGVWC) the chain is on the extracellular side. Cysteines 95 and 169 form a disulfide. A helical membrane pass occupies residues 96–118 (EIYLALDVLFCTASITHLCAISL). Residues 119–138 (DRYWSITQAIEYNLKRTPQR) are Cytoplasmic-facing. The helical transmembrane segment at 139–162 (IKRIIFIVWIIAAVISCPPLITMK) threads the bilayer. Over 163 to 173 (KSEGDICDINK) the chain is Extracellular. The helical transmembrane segment at 174-198 (EKWYIVSSCIGSFFLPCIIMVLVYI) threads the bilayer. Residues 199 to 311 (RIYQIAKKRT…RQNREKRFTF (113 aa)) are Cytoplasmic-facing. A disordered region spans residues 208 to 291 (TRAPPGDHRK…PGDGDKTEAC (84 aa)). A compositionally biased stretch (basic and acidic residues) spans 212–231 (PGDHRKNEVGKKENDPHEKL). The span at 266-275 (LKKKSSKGKT) shows a compositional bias: basic residues. The helical transmembrane segment at 312-337 (VLAVVIGVFVICWFPFFFTYTFTAFC) threads the bilayer. At 338–344 (DCCVPET) the chain is on the extracellular side. A helical membrane pass occupies residues 345–368 (LFKFFFWFGYCNSSLNPIIYTIFN). Over 369 to 388 (NDFRRSFKKILCRRDKRRVV) the chain is Cytoplasmic. A lipid anchor (S-palmitoyl cysteine) is attached at cysteine 380.

It belongs to the G-protein coupled receptor 1 family. Adrenergic receptor subfamily. ADRA2A sub-subfamily.

It is found in the cell membrane. Functionally, alpha-2 adrenergic receptors mediate the catecholamine-induced inhibition of adenylate cyclase through the action of G proteins. The order of potency for this receptor is dexmedetomidine &gt; oxymetazoline = epinephrine &gt; norepinephrine. The protein is Alpha-2A adrenergic receptor of Danio rerio (Zebrafish).